Consider the following 350-residue polypeptide: Protein FAM118B (350 aa).

Ala-2 is subject to N-acetylalanine. A Phosphoserine modification is found at Ser-9. A disordered region spans residues 330 to 350 (AREGQLNGSSAAHGEIRGCST).

This sequence belongs to the FAM118 family.

The protein resides in the nucleus. It localises to the cajal body. Functionally, may play a role in Cajal bodies formation. This chain is Protein FAM118B (Fam118b), found in Rattus norvegicus (Rat).